The sequence spans 28 residues: Aryl acylamidase (28 aa).

In terms of assembly, homodimer.

It catalyses the reaction an anilide + H2O = aniline + a carboxylate + H(+). The chain is Aryl acylamidase from Nocardia globerula.